We begin with the raw amino-acid sequence, 185 residues long: Ribosome-recycling factor (185 aa).

Belongs to the RRF family.

The protein resides in the cytoplasm. Functionally, responsible for the release of ribosomes from messenger RNA at the termination of protein biosynthesis. May increase the efficiency of translation by recycling ribosomes from one round of translation to another. This Aeromonas salmonicida (strain A449) protein is Ribosome-recycling factor.